The chain runs to 423 residues: MQYEDENGVNEPSRRRLLKGIGALALAGSCPVAHAQKTQSAPGTLSPDARNEKQPFYGEHQAGILTPQQAAMMLVAFDVLASDKADLERLFRLLTQRFAFLTQGGAAPETPNPRLPPLDSGILGGYIAPDNLTITLSVGHSLFDERFGLAPQMPKKLQKMTRFPNDSLDAALCHGDVLLQICANTQDTVIHALRDIIKHTPDLLSVRWKREGFISDHAARSKGKETPINLLGFKDGTANPDSQNAKLMQKVVWVTADQQEPAWTIGGSYQAVRLIQFRVEFWDRTPLKEQQTIFGRDKQTGAPLGMLHEHDVPDYASDPEGKVIALDSHIRLANPRTAESESSLMLRRGYSYSLGVTNSGQLDMGLLFVCYQHDLEKGFLTVQKRLNGEALEEYVKPIGGGYFFALPGVKDANDYLGSALLRV.

The tat-type signal signal peptide spans 1–35 (MQYEDENGVNEPSRRRLLKGIGALALAGSCPVAHA). Residues 236–238 (GTA), His329, 334–336 (NPR), and Arg347 each bind heme b.

It belongs to the DyP-type peroxidase family. EfeB subfamily. Homodimer. Part of a ferrous iron transporter composed of EfeU, EfeO and EfeB. Requires heme b as cofactor. Predicted to be exported by the Tat system. The position of the signal peptide cleavage has not been experimentally proven.

Its subcellular location is the periplasm. The catalysed reaction is heme b + 2 H(+) = protoporphyrin IX + Fe(2+). In terms of biological role, involved in the recovery of exogenous heme iron. Extracts iron from heme while preserving the protoporphyrin ring intact. The sequence is that of Deferrochelatase (efeB) from Escherichia coli O6:K15:H31 (strain 536 / UPEC).